The primary structure comprises 404 residues: Glucose-1-phosphate adenylyltransferase (404 aa).

Residues Tyr-99, Gly-164, 179 to 180, and Ser-197 contribute to the alpha-D-glucose 1-phosphate site; that span reads EK.

This sequence belongs to the bacterial/plant glucose-1-phosphate adenylyltransferase family.

It carries out the reaction alpha-D-glucose 1-phosphate + ATP + H(+) = ADP-alpha-D-glucose + diphosphate. It participates in capsule biogenesis; capsule polysaccharide biosynthesis. The protein operates within glycan biosynthesis; glycogen biosynthesis. In terms of biological role, involved in the biosynthesis of ADP-glucose, a building block, required in the biosynthesis of maltose-1-phosphate (M1P) and in the elongation reactions to produce linear alpha-1,4-glucans. Catalyzes the reaction between ATP and alpha-D-glucose 1-phosphate (G1P) to produce pyrophosphate and ADP-Glc. The protein is Glucose-1-phosphate adenylyltransferase of Mycobacterium leprae (strain Br4923).